The chain runs to 122 residues: ATP-dependent Clp protease adapter protein ClpS (122 aa).

It belongs to the ClpS family. In terms of assembly, binds to the N-terminal domain of the chaperone ClpA.

In terms of biological role, involved in the modulation of the specificity of the ClpAP-mediated ATP-dependent protein degradation. This Pseudomonas fluorescens (strain SBW25) protein is ATP-dependent Clp protease adapter protein ClpS.